The sequence spans 286 residues: uncharacterized protein (286 aa).

One can recognise an HTH lysR-type domain in the interval 1-58 (MLLEGIETLLVLSKEKTMSRTGSQLYISQSAVSKRIANLEKKLGKKLIVPAGRHIKLT). Positions 18-37 (MSRTGSQLYISQSAVSKRIA) form a DNA-binding region, H-T-H motif.

It belongs to the LysR transcriptional regulatory family.

This is an uncharacterized protein from Vibrio cholerae serotype O1 (strain ATCC 39315 / El Tor Inaba N16961).